We begin with the raw amino-acid sequence, 514 residues long: Maturase K (514 aa).

It belongs to the intron maturase 2 family. MatK subfamily.

The protein localises to the plastid. It localises to the chloroplast. Usually encoded in the trnK tRNA gene intron. Probably assists in splicing its own and other chloroplast group II introns. The protein is Maturase K of Encephalartos altensteinii (Altenstein's bread tree).